Here is a 230-residue protein sequence, read N- to C-terminus: Acetyltransferase (230 aa).

Positions 143 to 230 constitute an N-acetyltransferase domain; it reads RYLDGKVICD…RVAVYKARQT (88 aa).

It participates in mycotoxin biosynthesis. In terms of biological role, acetyltransferase; part of the satratoxin SC3 cluster involved in the biosynthesis of satratoxins, trichothecene mycotoxins that are associated with human food poisonings. Satratoxins are suggested to be made by products of multiple gene clusters (SC1, SC2 and SC3) that encode 21 proteins in all, including polyketide synthases, acetyltransferases, and other enzymes expected to modify the trichothecene skeleton. SC1 encodes 10 proteins, SAT1 to SAT10. The largest are SAT8, which encodes a putative polyketide synthase (PKS) with a conventional non-reducing architecture, and SAT10, a putative protein containing four ankyrin repeats and thus may be involved in protein scaffolding. The putative short-chain reductase SAT3 may assist the PKS in some capacity. SAT6 contains a secretory lipase domain and acts probably as a trichothecene esterase. SAT5 encodes a putative acetyltransferase, and so, with SAT6, may affect endogenous protection from toxicity. The probable transcription factor SAT9 may regulate the expression of the SC1 cluster. SC2 encodes proteins SAT11 to SAT16, the largest of which encodes the putative reducing PKS SAT13. SAT11 is a cytochrome P450 monooxygenase, while SAT14 and SAT16 are probable acetyltransferases. The SC2 cluster may be regulated by the transcription factor SAT15. SC3 is a small cluster that encodes 5 proteins, SAT17 to SAT21. SAT21 is a putative MFS-type transporter which may have a role in exporting secondary metabolites. The four other proteins putatively encoded in SC3 include the taurine hydroxylase-like protein SAT17, the O-methyltransferase SAT18, the acetyltransferase SAT19, and the Cys6-type zinc finger SAT20, the latter being probably involved in regulation of SC3 expression. The sequence is that of Acetyltransferase from Stachybotrys chartarum (strain CBS 109288 / IBT 7711) (Toxic black mold).